The primary structure comprises 130 residues: Anti-adapter protein IraD (130 aa).

Belongs to the GpW/Gp25 family. IraD subfamily. As to quaternary structure, interacts with RssB.

The protein resides in the cytoplasm. Functionally, inhibits RpoS proteolysis by regulating RssB activity, thereby increasing the stability of the sigma stress factor RpoS during oxidative stress. Its effect on RpoS stability is due to its interaction with RssB, which probably blocks the interaction of RssB with RpoS, and the consequent delivery of the RssB-RpoS complex to the ClpXP protein degradation pathway. The protein is Anti-adapter protein IraD of Escherichia coli O9:H4 (strain HS).